Here is a 743-residue protein sequence, read N- to C-terminus: Conserved oligomeric Golgi complex subunit 8 (743 aa).

Disordered regions lie at residues 549 to 672 and 704 to 743; these read EDGP…TEPE and TQDDPIEEEEGWGWGDDDGEEQEISSKEVESPKEKCKKDD. Composition is skewed to basic and acidic residues over residues 563–581, 594–621, 633–647, and 654–664; these read ESVKEQETTSELEKKHGTD, PVKEHETTSELTKEQEPAFEPEKLHETP, SEAKAAHNPEAHLEL, and QEIREQEHKEV. The span at 704-726 shows a compositional bias: acidic residues; the sequence is TQDDPIEEEEGWGWGDDDGEEQE. The span at 727–743 shows a compositional bias: basic and acidic residues; that stretch reads ISSKEVESPKEKCKKDD.

The protein belongs to the COG8 family. As to quaternary structure, component of the conserved oligomeric Golgi complex which is composed of eight different subunits and is required for normal Golgi morphology and localization.

Its subcellular location is the golgi apparatus membrane. Required for normal Golgi function. In Caenorhabditis elegans, this protein is Conserved oligomeric Golgi complex subunit 8 (cogc-8).